We begin with the raw amino-acid sequence, 383 residues long: Chaperone protein DnaJ (383 aa).

Residues 6–70 (DYYDVLGVGR…QKRAAYDQYG (65 aa)) form the J domain. The segment at 140–222 (GKETKISYSR…CHGTGREEER (83 aa)) adopts a CR-type zinc-finger fold. Residues cysteine 153, cysteine 156, cysteine 170, cysteine 173, cysteine 196, cysteine 199, cysteine 210, and cysteine 213 each contribute to the Zn(2+) site. CXXCXGXG motif repeat units follow at residues 153–160 (CHTCHGSG), 170–177 (CHKCHGAG), 196–203 (CDVCGGTG), and 210–217 (CDTCHGTG).

It belongs to the DnaJ family. In terms of assembly, homodimer. Zn(2+) is required as a cofactor.

The protein localises to the cytoplasm. Functionally, participates actively in the response to hyperosmotic and heat shock by preventing the aggregation of stress-denatured proteins and by disaggregating proteins, also in an autonomous, DnaK-independent fashion. Unfolded proteins bind initially to DnaJ; upon interaction with the DnaJ-bound protein, DnaK hydrolyzes its bound ATP, resulting in the formation of a stable complex. GrpE releases ADP from DnaK; ATP binding to DnaK triggers the release of the substrate protein, thus completing the reaction cycle. Several rounds of ATP-dependent interactions between DnaJ, DnaK and GrpE are required for fully efficient folding. Also involved, together with DnaK and GrpE, in the DNA replication of plasmids through activation of initiation proteins. The polypeptide is Chaperone protein DnaJ (Latilactobacillus sakei subsp. sakei (strain 23K) (Lactobacillus sakei subsp. sakei)).